The following is a 158-amino-acid chain: NADH-quinone oxidoreductase subunit B (158 aa).

Cys-37, Cys-38, Cys-102, and Cys-132 together coordinate [4Fe-4S] cluster.

It belongs to the complex I 20 kDa subunit family. NDH-1 is composed of 14 different subunits. Subunits NuoB, C, D, E, F, and G constitute the peripheral sector of the complex. It depends on [4Fe-4S] cluster as a cofactor.

Its subcellular location is the cell inner membrane. The enzyme catalyses a quinone + NADH + 5 H(+)(in) = a quinol + NAD(+) + 4 H(+)(out). In terms of biological role, NDH-1 shuttles electrons from NADH, via FMN and iron-sulfur (Fe-S) centers, to quinones in the respiratory chain. The immediate electron acceptor for the enzyme in this species is believed to be ubiquinone. Couples the redox reaction to proton translocation (for every two electrons transferred, four hydrogen ions are translocated across the cytoplasmic membrane), and thus conserves the redox energy in a proton gradient. The sequence is that of NADH-quinone oxidoreductase subunit B from Thioalkalivibrio sulfidiphilus (strain HL-EbGR7).